Reading from the N-terminus, the 204-residue chain is FMN-dependent NADH:quinone oxidoreductase (204 aa).

Residues S10, 15 to 17 (SLS), and 139 to 142 (TSGG) contribute to the FMN site.

This sequence belongs to the azoreductase type 1 family. As to quaternary structure, homodimer. FMN serves as cofactor.

The catalysed reaction is 2 a quinone + NADH + H(+) = 2 a 1,4-benzosemiquinone + NAD(+). It carries out the reaction N,N-dimethyl-1,4-phenylenediamine + anthranilate + 2 NAD(+) = 2-(4-dimethylaminophenyl)diazenylbenzoate + 2 NADH + 2 H(+). Functionally, quinone reductase that provides resistance to thiol-specific stress caused by electrophilic quinones. In terms of biological role, also exhibits azoreductase activity. Catalyzes the reductive cleavage of the azo bond in aromatic azo compounds to the corresponding amines. The sequence is that of FMN-dependent NADH:quinone oxidoreductase from Rhizobium leguminosarum bv. trifolii (strain WSM2304).